We begin with the raw amino-acid sequence, 193 residues long: NADH-quinone oxidoreductase subunit B (193 aa).

C72, C73, C137, and C167 together coordinate [4Fe-4S] cluster.

This sequence belongs to the complex I 20 kDa subunit family. In terms of assembly, NDH-1 is composed of 14 different subunits. Subunits NuoB, C, D, E, F, and G constitute the peripheral sector of the complex. It depends on [4Fe-4S] cluster as a cofactor.

The protein localises to the cell inner membrane. The catalysed reaction is a quinone + NADH + 5 H(+)(in) = a quinol + NAD(+) + 4 H(+)(out). In terms of biological role, NDH-1 shuttles electrons from NADH, via FMN and iron-sulfur (Fe-S) centers, to quinones in the respiratory chain. Couples the redox reaction to proton translocation (for every two electrons transferred, four hydrogen ions are translocated across the cytoplasmic membrane), and thus conserves the redox energy in a proton gradient. This Brucella anthropi (strain ATCC 49188 / DSM 6882 / CCUG 24695 / JCM 21032 / LMG 3331 / NBRC 15819 / NCTC 12168 / Alc 37) (Ochrobactrum anthropi) protein is NADH-quinone oxidoreductase subunit B.